The following is a 137-amino-acid chain: uncharacterized protein (137 aa).

Residues 4-73 enclose the HTH merR-type domain; it reads MLTVSEVARK…LEEIADILHL (70 aa). The segment at residues 8 to 27 is a DNA-binding region (H-T-H motif); sequence SEVARKLGLNPQTLYFYERI.

This is an uncharacterized protein from Synechocystis sp. (strain ATCC 27184 / PCC 6803 / Kazusa).